Reading from the N-terminus, the 381-residue chain is Beta-lactamase CMY-2 (381 aa).

The first 20 residues, 1 to 20, serve as a signal peptide directing secretion; it reads MMKKSLCCALLLTASFSTFA. The active-site Acyl-ester intermediate is serine 84. A beta-lactam is bound by residues serine 84, glutamine 140, tyrosine 170, and asparagine 172.

Belongs to the class-C beta-lactamase family.

The enzyme catalyses a beta-lactam + H2O = a substituted beta-amino acid. Inhibited by the beta-lactamase-blocking agents sulbactam, tazobactam, avibactam and 3-aminophenylboronic acid (APB). Functionally, class C beta-lactamase which confers resistance to penicillins and cephalosporins. Has nitrocefin-, cefoxitin- and cefoperazone-hydrolyzing activities. This Klebsiella pneumoniae protein is Beta-lactamase CMY-2.